Here is a 349-residue protein sequence, read N- to C-terminus: tRNA pseudouridine synthase D (349 aa).

Residue phenylalanine 26 coordinates substrate. The Nucleophile role is filled by aspartate 79. Asparagine 128 contacts substrate. One can recognise a TRUD domain in the interval 154–302; it reads GVPNYFGEQR…VEGCRRAILV (149 aa). Residue phenylalanine 328 participates in substrate binding.

This sequence belongs to the pseudouridine synthase TruD family.

It catalyses the reaction uridine(13) in tRNA = pseudouridine(13) in tRNA. Responsible for synthesis of pseudouridine from uracil-13 in transfer RNAs. The protein is tRNA pseudouridine synthase D of Photorhabdus laumondii subsp. laumondii (strain DSM 15139 / CIP 105565 / TT01) (Photorhabdus luminescens subsp. laumondii).